Consider the following 194-residue polypeptide: uncharacterized protein (194 aa).

Disordered regions lie at residues 1–72 (MAAK…PAAE) and 113–194 (VLIP…SLAV). The span at 26–39 (AEGRSSEGRKERTA) shows a compositional bias: basic and acidic residues. Over residues 146–171 (GSSSTSRNQVASLAYRTQNTAASQPR) the composition is skewed to polar residues.

This is an uncharacterized protein from Homo sapiens (Human).